Consider the following 588-residue polypeptide: Nuclear hormone receptor family member nhr-23 (588 aa).

The disordered stretch occupies residues 50–73; it reads LHAKSSLQPSLSIETPKSKENDES. Positions 52–64 are enriched in polar residues; that stretch reads AKSSLQPSLSIET. Residues 160 to 235 constitute a DNA-binding region (nuclear receptor); sequence VIPCKVCGDK…LGMSRDAVKF (76 aa). 2 NR C4-type zinc fingers span residues 163–183 and 199–223; these read CKVC…CEGC and CPRQ…LKKC. The region spanning 345 to 586 is the NR LBD domain; sequence PEEDVATRVI…ALYKELFTAD (242 aa).

This sequence belongs to the nuclear hormone receptor family. NR1 subfamily. Expressed in the germline and oocytes and is a maternal gene product. In males and sperm-producing hermaphrodites, expressed in early pachytene spermatocytes, increasing in level throughout late pachytene. Expression is undetectable in meiotically dividing spermatocytes or mature spermatids.

It localises to the nucleus. In terms of biological role, orphan nuclear receptor. Transcription factor. Modulates expression of target genes, such as Period protein homolog lin-42 and microRNA let-7, by binding to hormone response elements (HRE). Involved in promoting oscillatory expression of the primary transcripts of let-7 and paralogous microRNAs miR-48, miR-84, and miR-241. Plays a role in normal development and required to regulate each larval molt. Involved in regulating both the frequency and number of molts, acting as part of a negative feedback loop with the let-7 family of microRNAs, perhaps contributing to a self-sustaining molecular-genetic oscillator. Positively modulates expression of collagen and hedgehog-related genes. Involved in development of the gonad and associated epidermal structures. Required in spermatogenesis, acting following the sperm/oocyte cell fate decision, downstream of the canonical sex-determination pathway. Involved in regulating formation of the sperm-specific fibrous body-membranous organelle (FB-MO) complexes, acting independently of transcription regulator spe-44. This is Nuclear hormone receptor family member nhr-23 from Caenorhabditis elegans.